A 94-amino-acid polypeptide reads, in one-letter code: Co-chaperonin GroES (94 aa).

This sequence belongs to the GroES chaperonin family. In terms of assembly, heptamer of 7 subunits arranged in a ring. Interacts with the chaperonin GroEL.

The protein resides in the cytoplasm. In terms of biological role, together with the chaperonin GroEL, plays an essential role in assisting protein folding. The GroEL-GroES system forms a nano-cage that allows encapsulation of the non-native substrate proteins and provides a physical environment optimized to promote and accelerate protein folding. GroES binds to the apical surface of the GroEL ring, thereby capping the opening of the GroEL channel. The polypeptide is Co-chaperonin GroES (Listeria monocytogenes serotype 4b (strain CLIP80459)).